We begin with the raw amino-acid sequence, 131 residues long: MMTLYSFSTEVRLRCAADYQGVFDGALFKVHQPHFLFLAKPSEQLQSRLGVIVAKKKVRRAHERNRIKRLARESFRLHQQQLGLLDIVVMPKIGIEAVSNADLHQQLEFAWQKLQRQAKKYQKVAVSPSLH.

Belongs to the RnpA family. In terms of assembly, consists of a catalytic RNA component (M1 or rnpB) and a protein subunit.

It catalyses the reaction Endonucleolytic cleavage of RNA, removing 5'-extranucleotides from tRNA precursor.. Functionally, RNaseP catalyzes the removal of the 5'-leader sequence from pre-tRNA to produce the mature 5'-terminus. It can also cleave other RNA substrates such as 4.5S RNA. The protein component plays an auxiliary but essential role in vivo by binding to the 5'-leader sequence and broadening the substrate specificity of the ribozyme. This Acinetobacter baylyi (strain ATCC 33305 / BD413 / ADP1) protein is Ribonuclease P protein component.